The sequence spans 743 residues: Cytosolic neutral trehalase (743 aa).

Asp95, Asp97, Asn99, Gln101, and Asp106 together coordinate Ca(2+). Substrate is bound by residues Arg285, 292–293 (WD), Asn329, 338–340 (RSQ), Glu405, Arg454, and Gly457. Catalysis depends on proton donor/acceptor residues Asp459 and Glu664.

It belongs to the glycosyl hydrolase 37 family. Requires Ca(2+) as cofactor.

It is found in the cytoplasm. The catalysed reaction is alpha,alpha-trehalose + H2O = alpha-D-glucose + beta-D-glucose. The protein operates within carbohydrate degradation. Hydrolyzes intracellular trehalose to glucose. This Beauveria bassiana (strain ARSEF 2860) (White muscardine disease fungus) protein is Cytosolic neutral trehalase.